Here is a 153-residue protein sequence, read N- to C-terminus: Small ribosomal subunit protein uS19 (153 aa).

Residues 1 to 63 form a unknown region; sequence MGFRGAWNKR…QEIWDEFRAF (63 aa). The tract at residues 64-153 is small ribosomal subunit protein uS19; that stretch reads VNKKAWVDPK…EKSAKVVKKK (90 aa).

Belongs to the universal ribosomal protein uS19 family.

In terms of biological role, protein S19 forms a complex with S13 that binds strongly to the 16S ribosomal RNA. The polypeptide is Small ribosomal subunit protein uS19 (Hydrogenobaculum sp. (strain Y04AAS1)).